The sequence spans 340 residues: Anthranilate phosphoribosyltransferase (340 aa).

5-phospho-alpha-D-ribose 1-diphosphate contacts are provided by residues G80, 83–84 (GD), T88, 90–93 (NIST), 108–116 (KHGNRAMSS), and S120. G80 contacts anthranilate. S92 serves as a coordination point for Mg(2+). Residue N111 participates in anthranilate binding. Anthranilate is bound at residue R166. Positions 225 and 226 each coordinate Mg(2+).

Belongs to the anthranilate phosphoribosyltransferase family. Homodimer. It depends on Mg(2+) as a cofactor.

The enzyme catalyses N-(5-phospho-beta-D-ribosyl)anthranilate + diphosphate = 5-phospho-alpha-D-ribose 1-diphosphate + anthranilate. The protein operates within amino-acid biosynthesis; L-tryptophan biosynthesis; L-tryptophan from chorismate: step 2/5. Catalyzes the transfer of the phosphoribosyl group of 5-phosphorylribose-1-pyrophosphate (PRPP) to anthranilate to yield N-(5'-phosphoribosyl)-anthranilate (PRA). This is Anthranilate phosphoribosyltransferase from Chloroflexus aggregans (strain MD-66 / DSM 9485).